Here is a 395-residue protein sequence, read N- to C-terminus: ATP phosphoribosyltransferase regulatory subunit (395 aa).

The protein belongs to the class-II aminoacyl-tRNA synthetase family. HisZ subfamily. As to quaternary structure, heteromultimer composed of HisG and HisZ subunits.

The protein resides in the cytoplasm. It participates in amino-acid biosynthesis; L-histidine biosynthesis; L-histidine from 5-phospho-alpha-D-ribose 1-diphosphate: step 1/9. Its function is as follows. Required for the first step of histidine biosynthesis. May allow the feedback regulation of ATP phosphoribosyltransferase activity by histidine. This Thioalkalivibrio sulfidiphilus (strain HL-EbGR7) protein is ATP phosphoribosyltransferase regulatory subunit.